A 311-amino-acid chain; its full sequence is m7GpppX diphosphatase (311 aa).

Substrate contacts are provided by residues glutamate 159, lysine 181, and 242 to 253 (HYQPSFYHLHVH). Residues 249 to 253 (HLHVH) carry the Histidine triad motif motif. The Nucleophile role is filled by histidine 251.

Belongs to the HIT family. In terms of tissue distribution, expressed in neurons in the ventral cord, the nerve ring and the pharynx.

The protein localises to the nucleus. It carries out the reaction a 5'-end (N(7)-methyl 5'-triphosphoguanosine)-ribonucleoside in mRNA + H2O = N(7)-methyl-GMP + a 5'-end diphospho-ribonucleoside in mRNA + 2 H(+). The catalysed reaction is a 5'-end (N(2),N(2),N(7)-trimethyl 5'-triphosphoguanosine)-ribonucleoside in mRNA + H2O = (N(2),N(2),N(7))-trimethyl-GMP + a 5'-end diphospho-ribonucleoside in mRNA + 2 H(+). With respect to regulation, the hydrolytic product 7-methylguanosine diphosphate (m7GDP) efficiently inhibits the decapping scavenger activity and acts as a competitive inhibitor in vitro. Its function is as follows. Decapping scavenger enzyme that catalyzes the cleavage of a residual cap structure following the degradation of mRNAs of the 3'-&gt;5' exosome-mediated mRNA decay pathway. Hydrolyzes cap analog structures like 7-methylguanosine nucleoside triphosphate (m7GpppG) and tri-methyl guanosine nucleoside triphosphate (m3(2,2,7)GpppG) with up to 2 nucleotide substrates (small capped oligoribonucleotides) and specifically releases 5'-phosphorylated RNA fragments and 7-methylguanosine monophosphate (m7GMP). Does not hydrolyze unmethylated cap analog (GpppG) and shows no decapping activity on intact m7GpppG-capped mRNA molecules. Does not hydrolyze 7-methylguanosine diphosphate (m7GDP) and tri-methylguanosine diphosphate (m3(2,2,7)GDP) to m(7)GMP and m3(2,2,7)GMP, respectively. May also play a role in the 5'-&gt;3 mRNA decay pathway; m7GDP, the downstream product released by the 5'-&gt;3' mRNA mediated decapping activity, may be also converted by dcs-1 to m7GMP. Binds to m7GpppG and strongly to m7GDP. The protein is m7GpppX diphosphatase (dcs-1) of Caenorhabditis elegans.